Consider the following 385-residue polypeptide: FK506-binding protein 5 (385 aa).

In terms of domain architecture, PPIase FKBP-type spans 26-115; it reads TNFVSVHYDA…RFEVELIGFW (90 aa). TPR repeat units follow at residues 128–161, 177–210, and 211–244; these read AEKKKNEGNALFKLDAIESALFAYRKGREYIQDL, VSIQLNIGACHLKLKHYDHAIEVCQKALDRDMTK, and IKAYYRIGQAYMEKGDYESSLTFIRIGLETAIGL.

The catalysed reaction is [protein]-peptidylproline (omega=180) = [protein]-peptidylproline (omega=0). With respect to regulation, inhibited by both FK506 and rapamycin. PPIases accelerate the folding of proteins. It catalyzes the cis-trans isomerization of proline imidic peptide bonds in oligopeptides. The polypeptide is FK506-binding protein 5 (FKBP5) (Rhizopus delemar (strain RA 99-880 / ATCC MYA-4621 / FGSC 9543 / NRRL 43880) (Mucormycosis agent)).